The primary structure comprises 1141 residues: DNA polymerase 120R (1141 aa).

Belongs to the DNA polymerase type-B family.

The catalysed reaction is DNA(n) + a 2'-deoxyribonucleoside 5'-triphosphate = DNA(n+1) + diphosphate. Functionally, DNA-directed DNA polymerase involved in viral DNA replication. The polypeptide is DNA polymerase 120R (Invertebrate iridescent virus 3 (IIV-3)).